Here is a 256-residue protein sequence, read N- to C-terminus: Protein N-terminal and lysine N-methyltransferase EFM7 (256 aa).

The interval 1-26 (MSDTESLNDALGLFDEPEDFRPEKPK) is disordered. Residues Trp64, 90–92 (GAA), Asp112, Trp145, and Ser168 contribute to the S-adenosyl-L-methionine site.

The protein belongs to the class I-like SAM-binding methyltransferase superfamily. EFM7 family.

It localises to the cytoplasm. In terms of biological role, S-adenosyl-L-methionine-dependent protein methyltransferase that trimethylates the N-terminal glycine 'Gly-2' of elongation factor 1-alpha, before also catalyzing the mono- and dimethylation of 'Lys-3'. The protein is Protein N-terminal and lysine N-methyltransferase EFM7 of Candida glabrata (strain ATCC 2001 / BCRC 20586 / JCM 3761 / NBRC 0622 / NRRL Y-65 / CBS 138) (Yeast).